A 326-amino-acid chain; its full sequence is Phospho-N-acetylmuramoyl-pentapeptide-transferase (326 aa).

9 consecutive transmembrane segments (helical) span residues 3 to 23 (ISISAGIVTFLLTLVGIPAFI), 51 to 71 (TMGGLVFLIASVLVAFFFALF), 79 to 99 (VGMILFILVLYGLIGFLDDFL), 115 to 135 (LALQLLGGVIFYLFYERGGDI), 138 to 158 (VFGYPVHLGFFYIFFALFWLV), 169 to 189 (GVDGLASISVVISLSAYGVIA), 195 to 215 (MDILLVILAMIGGLLGFFIFN), 221 to 243 (VFMGDVGSLALGGMLAAISMALH), and 306 to 326 (FFFWGVGLLASLLTLAILYLM).

It belongs to the glycosyltransferase 4 family. MraY subfamily. It depends on Mg(2+) as a cofactor.

The protein localises to the cell membrane. It carries out the reaction UDP-N-acetyl-alpha-D-muramoyl-L-alanyl-gamma-D-glutamyl-L-lysyl-D-alanyl-D-alanine + di-trans,octa-cis-undecaprenyl phosphate = Mur2Ac(oyl-L-Ala-gamma-D-Glu-L-Lys-D-Ala-D-Ala)-di-trans,octa-cis-undecaprenyl diphosphate + UMP. It functions in the pathway cell wall biogenesis; peptidoglycan biosynthesis. In terms of biological role, catalyzes the initial step of the lipid cycle reactions in the biosynthesis of the cell wall peptidoglycan: transfers peptidoglycan precursor phospho-MurNAc-pentapeptide from UDP-MurNAc-pentapeptide onto the lipid carrier undecaprenyl phosphate, yielding undecaprenyl-pyrophosphoryl-MurNAc-pentapeptide, known as lipid I. In Streptococcus pneumoniae serotype 19F (strain G54), this protein is Phospho-N-acetylmuramoyl-pentapeptide-transferase.